The chain runs to 341 residues: Cytoplasmic tRNA 2-thiolation protein 1 (341 aa).

Belongs to the TtcA family. CTU1/NCS6/ATPBD3 subfamily.

It localises to the cytoplasm. It participates in tRNA modification; 5-methoxycarbonylmethyl-2-thiouridine-tRNA biosynthesis. Plays a central role in 2-thiolation of mcm(5)S(2)U at tRNA wobble positions of tRNA(Lys), tRNA(Glu) and tRNA(Gln). Directly binds tRNAs and probably acts by catalyzing adenylation of tRNAs, an intermediate required for 2-thiolation. It is unclear whether it acts as a sulfurtransferase that transfers sulfur from thiocarboxylated URM1 onto the uridine of tRNAs at wobble position. This is Cytoplasmic tRNA 2-thiolation protein 1 from Aedes aegypti (Yellowfever mosquito).